The sequence spans 80 residues: MSFEVLEKLEAKIQTAVDTIALLQMEVDELKEDKAKLETEANELRAQREQLEQKAQQTQQEHAQWQERIRALLGKMEDVE.

Residues 3–80 (FEVLEKLEAK…ALLGKMEDVE (78 aa)) adopt a coiled-coil conformation.

Belongs to the ZapB family. In terms of assembly, homodimer. The ends of the coiled-coil dimer bind to each other, forming polymers. Interacts with FtsZ.

The protein localises to the cytoplasm. In terms of biological role, non-essential, abundant cell division factor that is required for proper Z-ring formation. It is recruited early to the divisome by direct interaction with FtsZ, stimulating Z-ring assembly and thereby promoting cell division earlier in the cell cycle. Its recruitment to the Z-ring requires functional FtsA or ZipA. This Vibrio vulnificus (strain CMCP6) protein is Cell division protein ZapB.